Reading from the N-terminus, the 84-residue chain is Large ribosomal subunit protein bL27 (84 aa).

A disordered region spans residues 1–21 (MAHKKAGGSTRNGRDSNPKYL).

The protein belongs to the bacterial ribosomal protein bL27 family.

The polypeptide is Large ribosomal subunit protein bL27 (Francisella tularensis subsp. holarctica (strain FTNF002-00 / FTA)).